Here is a 115-residue protein sequence, read N- to C-terminus: uncharacterized protein (115 aa).

The tract at residues 9–30 (EGLRERGASGKNEQKKKKKEKI) is disordered.

This is an uncharacterized protein from Saccharomyces cerevisiae (strain ATCC 204508 / S288c) (Baker's yeast).